Here is a 379-residue protein sequence, read N- to C-terminus: UDP-4-amino-4-deoxy-L-arabinose--oxoglutarate aminotransferase (379 aa).

Lys182 carries the N6-(pyridoxal phosphate)lysine modification.

Belongs to the DegT/DnrJ/EryC1 family. ArnB subfamily. As to quaternary structure, homodimer. Pyridoxal 5'-phosphate serves as cofactor.

It carries out the reaction UDP-4-amino-4-deoxy-beta-L-arabinose + 2-oxoglutarate = UDP-beta-L-threo-pentopyranos-4-ulose + L-glutamate. Its pathway is nucleotide-sugar biosynthesis; UDP-4-deoxy-4-formamido-beta-L-arabinose biosynthesis; UDP-4-deoxy-4-formamido-beta-L-arabinose from UDP-alpha-D-glucuronate: step 2/3. It participates in bacterial outer membrane biogenesis; lipopolysaccharide biosynthesis. Its function is as follows. Catalyzes the conversion of UDP-4-keto-arabinose (UDP-Ara4O) to UDP-4-amino-4-deoxy-L-arabinose (UDP-L-Ara4N). The modified arabinose is attached to lipid A and is required for resistance to polymyxin and cationic antimicrobial peptides. In Salmonella paratyphi A (strain ATCC 9150 / SARB42), this protein is UDP-4-amino-4-deoxy-L-arabinose--oxoglutarate aminotransferase.